The primary structure comprises 207 residues: Putative 3-methyladenine DNA glycosylase (207 aa).

The protein belongs to the DNA glycosylase MPG family.

This chain is Putative 3-methyladenine DNA glycosylase, found in Koribacter versatilis (strain Ellin345).